The following is a 247-amino-acid chain: Protein FAM133B (247 aa).

Disordered regions lie at residues 19–38 and 70–247; these read SRGPIQSSGPTIQDYLNRPR and KKEL…PDSP. Positions 70 to 80 are enriched in basic and acidic residues; that stretch reads KKELEKHREKL. Residue Ser-82 is modified to Phosphoserine. Basic residues predominate over residues 89-102; the sequence is KKRQRKKKEKKKSG. The segment covering 103–119 has biased composition (low complexity); sequence RYSSSSSSSSDSSSSSS. Positions 128 to 140 are enriched in basic residues; it reads QGKRRKKKKNRSH. A compositionally biased stretch (basic and acidic residues) spans 165 to 176; the sequence is KDGTEKEKDIKG. 4 positions are modified to phosphoserine: Ser-191, Ser-192, Ser-194, and Ser-196. The span at 211-221 shows a compositional bias: basic and acidic residues; it reads SSEEREKATEK. Residues 222-239 are compositionally biased toward basic residues; that stretch reads TKKKKKHKKHSKKKKKKA.

The protein belongs to the FAM133 family.

This chain is Protein FAM133B (FAM133B), found in Homo sapiens (Human).